The primary structure comprises 298 residues: Protease HtpX homolog (298 aa).

Helical transmembrane passes span 15–35 (YVMIGFAILVLFIGAAVGYVF) and 39–59 (AMAGIIMAAVIAAIYMAMMIA). His-143 is a Zn(2+) binding site. Residue Glu-144 is part of the active site. His-147 contributes to the Zn(2+) binding site. 2 helical membrane-spanning segments follow: residues 158-178 (IALALSSAIAMLVNIGMRSFW) and 197-217 (IVMMIISIVLVILGPIATTIA). Glu-226 is a binding site for Zn(2+).

Belongs to the peptidase M48B family. It depends on Zn(2+) as a cofactor.

The protein localises to the cell membrane. The polypeptide is Protease HtpX homolog (Pediococcus pentosaceus (strain ATCC 25745 / CCUG 21536 / LMG 10740 / 183-1w)).